Reading from the N-terminus, the 366-residue chain is Cobalt-precorrin-5B C(1)-methyltransferase (366 aa).

This sequence belongs to the CbiD family.

The catalysed reaction is Co-precorrin-5B + S-adenosyl-L-methionine = Co-precorrin-6A + S-adenosyl-L-homocysteine. It participates in cofactor biosynthesis; adenosylcobalamin biosynthesis; cob(II)yrinate a,c-diamide from sirohydrochlorin (anaerobic route): step 6/10. Catalyzes the methylation of C-1 in cobalt-precorrin-5B to form cobalt-precorrin-6A. The protein is Cobalt-precorrin-5B C(1)-methyltransferase of Methanococcus maripaludis (strain C7 / ATCC BAA-1331).